The sequence spans 95 residues: Scytovirin (95 aa).

The segment at 3 to 41 (GPTYCWNEANNPGGPNRCSNNKQCDGARTCSSSGFCQGT) is SD1. 5 cysteine pairs are disulfide-bonded: Cys7-Cys55, Cys20-Cys32, Cys26-Cys38, Cys68-Cys80, and Cys74-Cys86. The segment at 51 to 89 (GPTYCWDEAKNPGGPNRCSNSKQCDGARTCSSSGFCQGT) is SD2.

In terms of biological role, has strong anti-HIV activity against T-tropic strains of HIV-1 and weaker activity against M-tropic strains of HIV-1. Inhibits HIV-1 fusion and infection of CD4 LTR beta-gal cells in vitro. Inhibits fusion of HIV infected CEM-SS cells with uninfected CEM-SS cells, and fusion of HIV-1 Env expressing HL2/3 cells with CD4 LTR beta-gal cells. Binds to HIV gp120, HIV gp160 and to a lesser extent HIV gp41. Binding to HIV gp120 is glycosylation dependent. Binds with high specificity to the tetrasaccharide Man-alpha-1,2-Man-alpha-1,6-Man-alpha-1,6-Man and also binds the higher-order oligosaccharides oligomannose 8 and oligomannose 9. Does not bind to monosaccharides, complex or hybrid N-linked oligosaccharides or chitin. This chain is Scytovirin, found in Scytonema varium.